The chain runs to 886 residues: Desmocollin-1 (886 aa).

An N-terminal signal peptide occupies residues 1-29 (MAVACAAPGSTFSKQLLFFLLVLVLFCDA). A propeptide spanning residues 30–134 (CQKVSLHVPS…KEPVHNRSKR (105 aa)) is cleaved from the precursor. N-linked (GlcNAc...) asparagine glycosylation is found at asparagine 130 and asparagine 165. Cadherin domains are found at residues 135-242 (RWAP…APYF), 243-354 (ETKL…SPYF), 355-471 (TQTS…GPEC), 472-575 (QPPV…DHPP), and 576-682 (QIDK…EERD). Residues 135 to 691 (RWAPIPCSLM…DAKPNIILGK (557 aa)) are Extracellular-facing. Threonine 385 carries the phosphothreonine modification. An N-linked (GlcNAc...) (high mannose) asparagine glycan is attached at asparagine 546. N-linked (GlcNAc...) asparagine glycosylation is present at asparagine 613. A helical transmembrane segment spans residues 692 to 714 (WAILAMVLGSALLLCILFTCFCV). The Cytoplasmic portion of the chain corresponds to 715–886 (TTTKRTVKKC…RTLAKTCVKK (172 aa)).

In terms of assembly, binds to JUP/plakoglobin. Expressed in the epidermis and inner root sheaths of hair follicles (at protein level).

It localises to the cell membrane. The protein resides in the cell junction. The protein localises to the desmosome. In terms of biological role, a component of desmosome cell-cell junctions which are required for positive regulation of cellular adhesion. Required for desmosome adhesion strength between the granular layers of the epidermis, as a result moderates epidermal proliferation and differentiation. Is therefore required to maintain postnatal epidermal barrier function and normal hair follicle morphology into adulthood. In Mus musculus (Mouse), this protein is Desmocollin-1 (Dsc1).